Consider the following 485-residue polypeptide: MADILRRLTNSERCRLLQDKLDDWYKDYHINSCDSNLNVCCELLELNSKVQGQLFKILSVTAQEGGQYAGVETIKSRFLPWLGTCFSTASPGSFSENSFVTLNESMERKLSTSHERELNEVESKLSSTRIELNSVRQELLETQMDLEDTKTKSANTLLATEEEILQLRAELRAAREKLELRSLDSIDEYERQIRLLKDEISILSSESSILKSRLSRSRSPSPIRHSSRSSSPFARSESPTSAKLTSASRQARLISRFNDIFANDRLDAQTLLRRYIQDLDMVQRIIFIATVESFHSAKMAFRQFRLRVCKSLSPSHMGPESLEDAVIDYIVGNLDLYDVQSSVNEVISAMNVNPKISFPPEVDFILISGFIQEVCRVAFTMQTLDPPLDIAFTVDGELFTDSKYRRTYDSEHTAPLVYYHVWPALMENDNVIVKGEAVTKRGALWNSIRSRSRSASPLRSHSDSPGHNLTRSRSPSPRRSGTPRF.

The stretch at 112–210 (TSHERELNEV…SILSSESSIL (99 aa)) forms a coiled coil. Low complexity-rich tracts occupy residues 214–241 (LSRSRSPSPIRHSSRSSSPFARSESPTS) and 471–485 (RSRSPSPRRSGTPRF). Disordered stretches follow at residues 214-244 (LSRSRSPSPIRHSSRSSSPFARSESPTSAKL) and 451-485 (RSRSASPLRSHSDSPGHNLTRSRSPSPRRSGTPRF).

The protein belongs to the MIEAP family.

It is found in the cytoplasm. Its subcellular location is the mitochondrion outer membrane. The protein resides in the mitochondrion matrix. Its function is as follows. Key regulator of mitochondrial quality that mediates the repairing or degradation of unhealthy mitochondria in response to mitochondrial damage. Mediator of mitochondrial protein catabolic process (also named MALM) by mediating the degradation of damaged proteins inside mitochondria by promoting the accumulation in the mitochondrial matrix of hydrolases that are characteristic of the lysosomal lumen. Also involved in mitochondrion degradation of damaged mitochondria by promoting the formation of vacuole-like structures (named MIV), which engulf and degrade unhealthy mitochondria by accumulating lysosomes. Binds cardiolipin. May form molecular condensates (non-membrane-bounded organelles) within mitochondria that compartmentalize and promote cardiolipin metabolism. The protein is Mitochondria-eating protein (spata18) of Xenopus laevis (African clawed frog).